We begin with the raw amino-acid sequence, 817 residues long: DNA ligase (817 aa).

Residues 45–49 (DVEYD), 94–95 (SI), and Glu131 contribute to the NAD(+) site. Lys133 functions as the N6-AMP-lysine intermediate in the catalytic mechanism. 4 residues coordinate NAD(+): Arg154, Glu193, Lys311, and Lys335. Zn(2+) is bound by residues Cys444, Cys447, Cys462, and Cys468. Residues 733-817 (AEEGVLDGKT…LLKKPAGDQA (85 aa)) form the BRCT domain.

Belongs to the NAD-dependent DNA ligase family. LigA subfamily. Mg(2+) serves as cofactor. The cofactor is Mn(2+).

It carries out the reaction NAD(+) + (deoxyribonucleotide)n-3'-hydroxyl + 5'-phospho-(deoxyribonucleotide)m = (deoxyribonucleotide)n+m + AMP + beta-nicotinamide D-nucleotide.. Its function is as follows. DNA ligase that catalyzes the formation of phosphodiester linkages between 5'-phosphoryl and 3'-hydroxyl groups in double-stranded DNA using NAD as a coenzyme and as the energy source for the reaction. It is essential for DNA replication and repair of damaged DNA. This is DNA ligase from Ralstonia pickettii (strain 12J).